A 1316-amino-acid chain; its full sequence is DNA-directed RNA polymerase subunit beta' (1316 aa).

Zn(2+) contacts are provided by C60, C62, C75, and C78. Positions 535, 537, and 539 each coordinate Mg(2+). 4 residues coordinate Zn(2+): C891, C968, C975, and C978.

The protein belongs to the RNA polymerase beta' chain family. In terms of assembly, the RNAP catalytic core consists of 2 alpha, 1 beta, 1 beta' and 1 omega subunit. When a sigma factor is associated with the core the holoenzyme is formed, which can initiate transcription. Mg(2+) serves as cofactor. Zn(2+) is required as a cofactor.

The enzyme catalyses RNA(n) + a ribonucleoside 5'-triphosphate = RNA(n+1) + diphosphate. DNA-dependent RNA polymerase catalyzes the transcription of DNA into RNA using the four ribonucleoside triphosphates as substrates. This chain is DNA-directed RNA polymerase subunit beta', found in Mycobacterium tuberculosis (strain CDC 1551 / Oshkosh).